A 273-amino-acid chain; its full sequence is MDRYAVFGNPINHSKSPFIHTLFARQTQQLLTYEKIEAPVDDFVGSIRRFFAEGGKGANVTVPFKEQAFQLVDQLSPRAKLAGAVNTLKLTDDGLLLGDNTDGAGLVQDLKYHLEELAGKKILLLGAGGACRGVIGPLLEQRPSEIVIANRTVAKAEQLAQEFAAMGKVRVSQFAELNESFDLIINGTSASLAGAMPDIPDAVIGSATVTYDMMYGSKETVFNLWAKEHGAIKTIDGLGMLVCQAAESFAVWRGIRPGTRQVIRELRRNITGA.

Shikimate contacts are provided by residues 14 to 16 and threonine 61; that span reads SKS. The active-site Proton acceptor is the lysine 65. Residues asparagine 86 and aspartate 102 each contribute to the shikimate site. Residues 126 to 130, 150 to 155, and methionine 213 each bind NADP(+); these read GAGGA and NRTVAK. Tyrosine 215 serves as a coordination point for shikimate. NADP(+) is bound at residue glycine 237.

Belongs to the shikimate dehydrogenase family. Homodimer.

The catalysed reaction is shikimate + NADP(+) = 3-dehydroshikimate + NADPH + H(+). It functions in the pathway metabolic intermediate biosynthesis; chorismate biosynthesis; chorismate from D-erythrose 4-phosphate and phosphoenolpyruvate: step 4/7. Involved in the biosynthesis of the chorismate, which leads to the biosynthesis of aromatic amino acids. Catalyzes the reversible NADPH linked reduction of 3-dehydroshikimate (DHSA) to yield shikimate (SA). The sequence is that of Shikimate dehydrogenase (NADP(+)) from Tolumonas auensis (strain DSM 9187 / NBRC 110442 / TA 4).